Reading from the N-terminus, the 256-residue chain is MPLHKVPVGLWKRLRLREGIYSRLPAHYLRSLEEARTPTPVHFRPHGAKFKINPKNGQRERVEDVPIPVHYPPESQLGLWGGEGWLKGHRYVNNDKFSKRVKKVWKPQLFQRELYSEILDTRFTVTVTMRTLDLIDEAYGFDFYILKTPKEDLCSKFGMDLKRGMLLRLARQDPQLHPDDPERRAAIYDKYKAFVIPEAEAEWVGLTLDEAVEKQRLLEEKDPVPLFKVYVEELVEQLQQQALSEPAVVQKRANRT.

The transit peptide at 1–55 (MPLHKVPVGLWKRLRLREGIYSRLPAHYLRSLEEARTPTPVHFRPHGAKFKINPK) directs the protein to the mitochondrion.

Belongs to the bacterial ribosomal protein bL28 family. Component of the mitochondrial ribosome large subunit (39S) which comprises a 16S rRNA and about 50 distinct proteins. Interacts with OXA1L.

The protein localises to the mitochondrion. The protein is Large ribosomal subunit protein bL28m (MRPL28) of Bos taurus (Bovine).